An 819-amino-acid chain; its full sequence is MVVLSAFPVNASPLLDTGDFADCRIVFVDANAPADDVNASSALQLPASSPAKAPANPGRSAPPSPGPRLATGVARNILSPKPKIWLGQFPQPATSRTGAGVEAPSRPAGPQPLLVVPGHRVVLAAASPLFRQQLATQADAIIRLRDRTSLPAAQQLLLAHVYGRPLDWPALTPTTLAQLLVLSADHALPALQQAAAARLLHLLAAKRPVGGPGPAVAAAAAGVNTPLQRPPCGPSPLEGGAGTALPAPPPAAAAPPAGAAAVVCTALQEVHSVYVEAIAAVVGLPTDVAGAGACVGLAAAARVLLLDALQDFEAAWQVPSLRRAFLGLPLPAALEVLASPALAVSCEGVVALAALAYEATRTQRAVEAAAAAAGEAGAADGGGGGGVGDGGGVLRPLDTCEQLALYGCVRWHLLHIDGRTHEWNSFLKNAVQRAPHLQRLLEHGTAASGTGGAVAAATGGVGLAPHAAAVPELAAAAAACGPYAAAASLLDLSQLTQSLLYTRQMRAEGGTGAAAHLPYMARRAGPRPRPTGHLQTAVHLQMDVPYVVLREAVARVQARMEQQERQRRLLERQQQQQQQHTKGGGGGGGVPAATAAALPLAVAPVAAVAVEEDLVGSELVFHAGYWWQMVVSLGPLCRYRMALAGPSAAAPPASGSAAVARNTPSALAAAAAAVAHDTDTRLVCFVGVRPLLLLTEAEVEAAAGRGVPSGWAGEGGCGGEGEGGEADGVAAVAAGAAVAARLLPSTVYVEQFEVWNERDLPQGRAALGPTAFARAGGFKGTLTLFALGAAALTSEAYWAKAVSGPEGALRVRARVAGVH.

Low complexity-rich tracts occupy residues 46–59 (PASS…NPGR) and 572–581 (RQQQQQQQHT). 2 disordered regions span residues 46 to 72 (PASS…LATG) and 564 to 590 (ERQR…GGGV). The stretch at 546–580 (YVVLREAVARVQARMEQQERQRRLLERQQQQQQQH) forms a coiled coil.

Its subcellular location is the cytoplasm. The protein localises to the cytoskeleton. The protein resides in the microtubule organizing center. It is found in the centrosome. It localises to the centriole. The polypeptide is Proteome of basal body protein 15 (Chlamydomonas reinhardtii (Chlamydomonas smithii)).